Consider the following 368-residue polypeptide: Probable endopolygalacturonase I (368 aa).

An N-terminal signal peptide occupies residues 1–18; sequence MHSFQLLGLAALGSLVAA. Residues 19-31 constitute a propeptide that is removed on maturation; it reads APSPSRVSDLTER. Cysteine 35 and cysteine 50 are disulfide-bonded. PbH1 repeat units lie at residues 162–192, 193–214, 215–235, 244–265, 273–295, and 307–328; these read ANNLHLTDITIDNSDGDSKGGHNTDGFDISE, SNGVYISGANVKNQDDCIAINS, GKNIEFTGGTCSGGHGLSIGS, VQGVKITDSTVTNSDNGIRIKT, VSDVTYSNIKLSGIHKKGIVIQQ, and SNGIPIKDVTVDGITGSVDSKA. Aspartate 207 functions as the Proton donor in the catalytic mechanism. Residues cysteine 209 and cysteine 225 are joined by a disulfide bond. Histidine 229 is an active-site residue. 2 disulfides stabilise this stretch: cysteine 335–cysteine 340 and cysteine 359–cysteine 368.

Belongs to the glycosyl hydrolase 28 family.

The protein localises to the secreted. The enzyme catalyses (1,4-alpha-D-galacturonosyl)n+m + H2O = (1,4-alpha-D-galacturonosyl)n + (1,4-alpha-D-galacturonosyl)m.. Its function is as follows. Involved in maceration and soft-rotting of plant tissue. Hydrolyzes the 1,4-alpha glycosidic bonds of de-esterified pectate in the smooth region of the plant cell wall. The sequence is that of Probable endopolygalacturonase I (pgaI) from Aspergillus terreus (strain NIH 2624 / FGSC A1156).